The chain runs to 352 residues: Quinolinate synthase (352 aa).

Iminosuccinate is bound by residues H48 and S69. C114 is a [4Fe-4S] cluster binding site. Iminosuccinate contacts are provided by residues 140-142 (YAN) and S157. C201 contacts [4Fe-4S] cluster. Iminosuccinate-binding positions include 227–229 (HPE) and T244. C298 contributes to the [4Fe-4S] cluster binding site.

It belongs to the quinolinate synthase family. Type 1 subfamily. It depends on [4Fe-4S] cluster as a cofactor.

It is found in the cytoplasm. The catalysed reaction is iminosuccinate + dihydroxyacetone phosphate = quinolinate + phosphate + 2 H2O + H(+). The protein operates within cofactor biosynthesis; NAD(+) biosynthesis; quinolinate from iminoaspartate: step 1/1. Functionally, catalyzes the condensation of iminoaspartate with dihydroxyacetone phosphate to form quinolinate. The polypeptide is Quinolinate synthase (Pseudomonas entomophila (strain L48)).